A 623-amino-acid chain; its full sequence is uncharacterized protein (623 aa).

5 helical membrane passes run 242–262, 288–308, 318–338, 361–381, and 387–407; these read IVLALTILALLLGLRKLITWL, IVSPVSVFLALFSCDVALDIF, VSMWVGAVYIMLLAWLVIALF, VINLILKVVYFLIFIVALLGV, and FNVSAIIASLGIGGLAVALAV.

Belongs to the MscS (TC 1.A.23) family.

The protein localises to the cell membrane. This is an uncharacterized protein from Helicobacter pylori (strain ATCC 700392 / 26695) (Campylobacter pylori).